Reading from the N-terminus, the 203-residue chain is Orotate phosphoribosyltransferase (203 aa).

5-phospho-alpha-D-ribose 1-diphosphate is bound by residues Arg94, Lys98, His100, and 120–128; that span reads EDLISTGGS. Ser124 lines the orotate pocket.

Belongs to the purine/pyrimidine phosphoribosyltransferase family. PyrE subfamily. As to quaternary structure, homodimer. The cofactor is Mg(2+).

The catalysed reaction is orotidine 5'-phosphate + diphosphate = orotate + 5-phospho-alpha-D-ribose 1-diphosphate. It functions in the pathway pyrimidine metabolism; UMP biosynthesis via de novo pathway; UMP from orotate: step 1/2. In terms of biological role, catalyzes the transfer of a ribosyl phosphate group from 5-phosphoribose 1-diphosphate to orotate, leading to the formation of orotidine monophosphate (OMP). This Staphylococcus aureus (strain MSSA476) protein is Orotate phosphoribosyltransferase.